Consider the following 289-residue polypeptide: BTB/POZ domain-containing protein KCTD7 (289 aa).

Residues 1–42 (MVVVNGREPDSRHSDGAMSSSEAEDDFLEPATPTATQAGHGL) form a disordered region. A BTB domain is found at 53-141 (VPLNIGGAHF…YAIGPLLEQL (89 aa)).

In terms of assembly, interacts with CUL3.

The protein localises to the cell membrane. It localises to the cytoplasm. The protein resides in the cytosol. In terms of biological role, may be involved in the control of excitability of cortical neurons. The chain is BTB/POZ domain-containing protein KCTD7 (Kctd7) from Rattus norvegicus (Rat).